The sequence spans 339 residues: UDP-N-acetylenolpyruvoylglucosamine reductase (339 aa).

Positions 19 to 189 constitute an FAD-binding PCMH-type domain; that stretch reads VDVQARLFAQ…LRVRFKLSRE (171 aa). Arg-166 is a catalytic residue. Ser-239 serves as the catalytic Proton donor. Glu-335 is an active-site residue.

It belongs to the MurB family. FAD is required as a cofactor.

It is found in the cytoplasm. The enzyme catalyses UDP-N-acetyl-alpha-D-muramate + NADP(+) = UDP-N-acetyl-3-O-(1-carboxyvinyl)-alpha-D-glucosamine + NADPH + H(+). The protein operates within cell wall biogenesis; peptidoglycan biosynthesis. Its function is as follows. Cell wall formation. This chain is UDP-N-acetylenolpyruvoylglucosamine reductase, found in Pseudomonas syringae pv. tomato (strain ATCC BAA-871 / DC3000).